Consider the following 56-residue polypeptide: Potassium channel toxin alpha-KTx 9.8 (56 aa).

The signal sequence occupies residues M1–A19. A propeptide spanning residues I20–A28 is cleaved from the precursor. Disulfide bonds link C31-C47, C34-C52, and C38-C54.

Belongs to the short scorpion toxin superfamily. Potassium channel inhibitor family. Alpha-KTx 09 subfamily. In terms of tissue distribution, expressed by the venom gland.

The protein localises to the secreted. Its function is as follows. Potassium channel inhibitor. The polypeptide is Potassium channel toxin alpha-KTx 9.8 (Buthus israelis (Israeli scorpion)).